The sequence spans 97 residues: Putative pterin-4-alpha-carbinolamine dehydratase (97 aa).

Belongs to the pterin-4-alpha-carbinolamine dehydratase family.

The enzyme catalyses (4aS,6R)-4a-hydroxy-L-erythro-5,6,7,8-tetrahydrobiopterin = (6R)-L-erythro-6,7-dihydrobiopterin + H2O. This Cyanothece sp. (strain PCC 7425 / ATCC 29141) protein is Putative pterin-4-alpha-carbinolamine dehydratase.